Here is an 832-residue protein sequence, read N- to C-terminus: Subtilisin-like protease SBT2.1 (832 aa).

Residues 1–24 form the signal peptide; sequence MDESSLVRFVFLLCLVSSSVFCLA. A propeptide spans 25–138 (activation peptide); that stretch reads ESDQNATVSS…VVLDFLVEKA (114 aa). Residues Asn-29 and Asn-73 are each glycosylated (N-linked (GlcNAc...) asparagine). An Inhibitor I9 domain is found at 36–136; sequence VYIVTLKDRP…ENVVLDFLVE (101 aa). The Peptidase S8 domain occupies 145–684; the sequence is FLGLPRGAWL…SGFVNATAAL (540 aa). Catalysis depends on Asp-172, which acts as the Charge relay system. An N-linked (GlcNAc...) asparagine glycan is attached at Asn-233. The active-site Charge relay system is the His-247. Asn-272, Asn-315, Asn-390, Asn-417, Asn-470, Asn-515, and Asn-522 each carry an N-linked (GlcNAc...) asparagine glycan. One can recognise a PA domain in the interval 408–503; the sequence is LVLATHALRN…MDIPGILISS (96 aa). The Charge relay system role is filled by Ser-609. Residues Asn-679, Asn-705, Asn-713, Asn-723, Asn-760, and Asn-801 are each glycosylated (N-linked (GlcNAc...) asparagine).

Belongs to the peptidase S8 family.

It is found in the secreted. This is Subtilisin-like protease SBT2.1 from Arabidopsis thaliana (Mouse-ear cress).